The sequence spans 295 residues: NADPH-dependent reductive aminase (295 aa).

The N-terminal stretch at 1 to 18 is a signal peptide; sequence MSKHIGIFGLGAMGTALA. NADP(+) is bound at residue 6–20; it reads GIFGLGAMGTALAAK.

It belongs to the HIBADH-related family. In terms of assembly, homodimer. It depends on NADPH as a cofactor.

NADPH-dependent reductive aminase that catalyzes the reductive coupling of a broad set of carbonyl compounds with a variety of primary and secondary amines. Possesses remarkably high activity for the reductive amination of ketones and amines, often with high stereoselectivity and in some cases with ketone:amine ratios as low as 1:1. The cofactor NADPH, the carbonyl compound and the amine are added to the enzyme in that sequence, followed by the release of product, NADP(+) being released at last. RedAm is also able to act in the reverse, oxidative direction and exhibits activity in the dehydrogenation of amines to yield imines. The highest activity is found for 1-methyl-tetrahydroquinoline and acyclic amines are also found to be transformed. This Aspergillus oryzae (strain ATCC 42149 / RIB 40) (Yellow koji mold) protein is NADPH-dependent reductive aminase.